We begin with the raw amino-acid sequence, 422 residues long: MMVDVLIKDISQMVTMKGSNGPRRGKDMREVHLIEDGWIAIKGDKIVAVGSGLMEENLKIGKNTMVIDGKGKTVTPGLVDPHTHLVHGGSRENELALKLNGVPYLDILAQGGGILSTVKATRKATVEELMQQGKRSLDQMLSFGVTTVEVKSGYGLNTETELKQLEVIRQLNKEHPCDLVPTFMGAHAIPMEYKEDPDVFVDIVIDEMLPAVVERGLAEFCDVFCEKGVFTVAQSRRVLEAAREAGLKLRIHVDEIEALGGAELAAEMGAITAEHLMVTSEEDMKKMAKAGVIAALLPGTSFNLMVGKYAQARKMIDYGVPITLSTDYNPGSCPTENIQFIMTLGCLAMKMTPEEVFTAVTINGAAAVDRQGDIGSLEVGKKADVVIFNAPNINYIPYHFGINHVDKVLKNGKLVVDKGRVI.

Positions 82 and 84 each coordinate Fe(3+). 2 residues coordinate Zn(2+): His-82 and His-84. Residues Arg-91, Tyr-154, and His-187 each coordinate 4-imidazolone-5-propanoate. Residue Tyr-154 coordinates N-formimidoyl-L-glutamate. A Fe(3+)-binding site is contributed by His-252. Residue His-252 coordinates Zn(2+). Glu-255 is a 4-imidazolone-5-propanoate binding site. Fe(3+) is bound at residue Asp-327. Residue Asp-327 coordinates Zn(2+). N-formimidoyl-L-glutamate contacts are provided by Asn-329 and Gly-331. Position 332 (Ser-332) interacts with 4-imidazolone-5-propanoate.

It belongs to the metallo-dependent hydrolases superfamily. HutI family. It depends on Zn(2+) as a cofactor. Fe(3+) is required as a cofactor.

The protein resides in the cytoplasm. The enzyme catalyses 4-imidazolone-5-propanoate + H2O = N-formimidoyl-L-glutamate. It functions in the pathway amino-acid degradation; L-histidine degradation into L-glutamate; N-formimidoyl-L-glutamate from L-histidine: step 3/3. Functionally, catalyzes the hydrolytic cleavage of the carbon-nitrogen bond in imidazolone-5-propanoate to yield N-formimidoyl-L-glutamate. It is the third step in the universal histidine degradation pathway. The chain is Imidazolonepropionase from Alkaliphilus metalliredigens (strain QYMF).